The primary structure comprises 134 residues: Glycine cleavage system H protein (134 aa).

The region spanning 24–106 (TVRVGITDYA…YGAGWLLDIQ (83 aa)) is the Lipoyl-binding domain. Lysine 65 is subject to N6-lipoyllysine.

Belongs to the GcvH family. In terms of assembly, the glycine cleavage system is composed of four proteins: P, T, L and H. The cofactor is (R)-lipoate.

The glycine cleavage system catalyzes the degradation of glycine. The H protein shuttles the methylamine group of glycine from the P protein to the T protein. The polypeptide is Glycine cleavage system H protein (Mycobacterium bovis (strain ATCC BAA-935 / AF2122/97)).